The primary structure comprises 225 residues: UPF0173 metal-dependent hydrolase Pars_0810 (225 aa).

The protein belongs to the UPF0173 family.

The sequence is that of UPF0173 metal-dependent hydrolase Pars_0810 from Pyrobaculum arsenaticum (strain DSM 13514 / JCM 11321 / PZ6).